The following is a 176-amino-acid chain: Nuclear ribonuclease Z (176 aa).

The protein belongs to the RNase Z family. As to quaternary structure, homodimer. Zn(2+) is required as a cofactor.

It is found in the nucleus. The enzyme catalyses Endonucleolytic cleavage of RNA, removing extra 3' nucleotides from tRNA precursor, generating 3' termini of tRNAs. A 3'-hydroxy group is left at the tRNA terminus and a 5'-phosphoryl group is left at the trailer molecule.. Its function is as follows. Zinc phosphodiesterase, which displays some tRNA 3'-processing endonuclease activity. Probably involved in tRNA maturation, by removing a 3'-trailer from precursor tRNA. The protein is Nuclear ribonuclease Z (ELAC) of Triticum aestivum (Wheat).